The sequence spans 375 residues: Chaperone protein DnaJ (375 aa).

Positions 5-69 constitute a J domain; that stretch reads DYYEILGIDK…QKRAQYDQFG (65 aa). The CR-type zinc-finger motif lies at 131–213; that stretch reads GKETDIEIPK…CGGSGTVQKN (83 aa). Cysteine 144, cysteine 147, cysteine 161, cysteine 164, cysteine 187, cysteine 190, cysteine 201, and cysteine 204 together coordinate Zn(2+). CXXCXGXG motif repeat units follow at residues 144–151, 161–168, 187–194, and 201–208; these read CDTCNGSG, CSHCHGSG, CNYCQGTG, and CNTCGGSG.

This sequence belongs to the DnaJ family. As to quaternary structure, homodimer. It depends on Zn(2+) as a cofactor.

The protein localises to the cytoplasm. In terms of biological role, participates actively in the response to hyperosmotic and heat shock by preventing the aggregation of stress-denatured proteins and by disaggregating proteins, also in an autonomous, DnaK-independent fashion. Unfolded proteins bind initially to DnaJ; upon interaction with the DnaJ-bound protein, DnaK hydrolyzes its bound ATP, resulting in the formation of a stable complex. GrpE releases ADP from DnaK; ATP binding to DnaK triggers the release of the substrate protein, thus completing the reaction cycle. Several rounds of ATP-dependent interactions between DnaJ, DnaK and GrpE are required for fully efficient folding. Also involved, together with DnaK and GrpE, in the DNA replication of plasmids through activation of initiation proteins. This chain is Chaperone protein DnaJ, found in Oceanobacillus iheyensis (strain DSM 14371 / CIP 107618 / JCM 11309 / KCTC 3954 / HTE831).